The primary structure comprises 154 residues: MAKKNTYSYQPKADEKIAKAAGHSLKISPKHSVEICRTIRNMYLEDAKAFLEDVIAKKTVVPFKRHNKKVGHRSDLKGWPSGRYPVKAAAAILKVLENAEANAENEELDVENLKLVHVCANRGVIIRGWTPRAFGRASPSNTPTTHIQIVLGEA.

This sequence belongs to the universal ribosomal protein uL22 family. In terms of assembly, part of the 50S ribosomal subunit.

Functionally, this protein binds specifically to 23S rRNA. It makes multiple contacts with different domains of the 23S rRNA in the assembled 50S subunit and ribosome. Its function is as follows. The globular domain of the protein is located near the polypeptide exit tunnel on the outside of the subunit, while an extended beta-hairpin is found that lines the wall of the exit tunnel in the center of the 70S ribosome. This is Large ribosomal subunit protein uL22 from Methanosphaera stadtmanae (strain ATCC 43021 / DSM 3091 / JCM 11832 / MCB-3).